An 85-amino-acid chain; its full sequence is MAKTKAGGSTRNGRDSKGRRLGAKLGDGQFALAGSIIYRQRGTKIFPGQNVGRGNDDTLFMLVDGYVKYEKRRNRKYASVYQEKK.

Residues Met-1–Gly-22 form a disordered region.

The protein belongs to the bacterial ribosomal protein bL27 family.

This Mycoplasmopsis pulmonis (strain UAB CTIP) (Mycoplasma pulmonis) protein is Large ribosomal subunit protein bL27.